The following is a 163-amino-acid chain: Endoribonuclease YbeY (163 aa).

Zn(2+)-binding residues include His-129, His-133, and His-139.

Belongs to the endoribonuclease YbeY family. Requires Zn(2+) as cofactor.

The protein localises to the cytoplasm. In terms of biological role, single strand-specific metallo-endoribonuclease involved in late-stage 70S ribosome quality control and in maturation of the 3' terminus of the 16S rRNA. In Picosynechococcus sp. (strain ATCC 27264 / PCC 7002 / PR-6) (Agmenellum quadruplicatum), this protein is Endoribonuclease YbeY.